Consider the following 287-residue polypeptide: Elongation factor Ts (287 aa).

An involved in Mg(2+) ion dislocation from EF-Tu region spans residues 80–83; sequence TDFL.

The protein belongs to the EF-Ts family.

It localises to the cytoplasm. In terms of biological role, associates with the EF-Tu.GDP complex and induces the exchange of GDP to GTP. It remains bound to the aminoacyl-tRNA.EF-Tu.GTP complex up to the GTP hydrolysis stage on the ribosome. This is Elongation factor Ts from Pseudomonas putida (strain ATCC 700007 / DSM 6899 / JCM 31910 / BCRC 17059 / LMG 24140 / F1).